The following is a 297-amino-acid chain: Pantothenate synthetase (297 aa).

Residue 30 to 37 (MGYLHAGH) coordinates ATP. His-37 functions as the Proton donor in the catalytic mechanism. Gln-61 lines the (R)-pantoate pocket. Gln-61 contacts beta-alanine. 147-150 (GEKD) lines the ATP pocket. Gln-153 is a binding site for (R)-pantoate. ATP is bound by residues Val-176 and 184–187 (LSSR).

This sequence belongs to the pantothenate synthetase family. As to quaternary structure, homodimer.

The protein resides in the cytoplasm. It catalyses the reaction (R)-pantoate + beta-alanine + ATP = (R)-pantothenate + AMP + diphosphate + H(+). Its pathway is cofactor biosynthesis; (R)-pantothenate biosynthesis; (R)-pantothenate from (R)-pantoate and beta-alanine: step 1/1. In terms of biological role, catalyzes the condensation of pantoate with beta-alanine in an ATP-dependent reaction via a pantoyl-adenylate intermediate. In Rhizobium etli (strain ATCC 51251 / DSM 11541 / JCM 21823 / NBRC 15573 / CFN 42), this protein is Pantothenate synthetase.